Reading from the N-terminus, the 141-residue chain is Hemoglobin subunit alpha-A (141 aa).

The Globin domain occupies valine 1–arginine 141. Position 58 (histidine 58) interacts with O2. Histidine 87 provides a ligand contact to heme b.

Belongs to the globin family. In terms of assembly, heterotetramer of two alpha chains and two beta chains. As to expression, red blood cells.

Involved in oxygen transport from the lung to the various peripheral tissues. The polypeptide is Hemoglobin subunit alpha-A (Drymarchon melanurus erebennus (Texas indigo snake)).